Consider the following 119-residue polypeptide: Succinate dehydrogenase assembly factor 2, mitochondrial (119 aa).

It belongs to the SDHAF2 family. In terms of assembly, interacts with the flavoprotein subunit within the SDH catalytic dimer.

It is found in the mitochondrion matrix. Functionally, plays an essential role in the assembly of succinate dehydrogenase (SDH), an enzyme complex (also referred to as respiratory complex II) that is a component of both the tricarboxylic acid (TCA) cycle and the mitochondrial electron transport chain, and which couples the oxidation of succinate to fumarate with the reduction of ubiquinone (coenzyme Q) to ubiquinol. Required for flavinylation (covalent attachment of FAD) of the flavoprotein subunit of the SDH catalytic dimer. This Caenorhabditis elegans protein is Succinate dehydrogenase assembly factor 2, mitochondrial.